The primary structure comprises 132 residues: Transmembrane protein 170B (132 aa).

The Extracellular segment spans residues 1–37 (MRAEGADHSMINLSVQQVLSLWAHGTVLRNLTEMWYW). Asn12 carries N-linked (GlcNAc...) asparagine glycosylation. The chain crosses the membrane as a helical span at residues 38-58 (IFLWALFSSLFVHGAAGVLMF). Residues 59–68 (VMLQRHRQGR) are Cytoplasmic-facing. The helical transmembrane segment at 69–89 (VLSIIAVSIGFLASVTGAMIT) threads the bilayer. Residues 90–104 (SAAVAGIYRVAGKNM) lie on the Extracellular side of the membrane. The helical transmembrane segment at 105–125 (APLEALVWGVGQTVLTLIISF) threads the bilayer. Residues 126-132 (SRILATL) lie on the Cytoplasmic side of the membrane.

Belongs to the TMEM170 family. In terms of assembly, interacts with CTNNB1.

It localises to the cell membrane. This Rattus norvegicus (Rat) protein is Transmembrane protein 170B (Tmem170b).